Reading from the N-terminus, the 286-residue chain is Protein MGF 360-3L (286 aa).

Residues 1 to 17 form a helical membrane-spanning segment; that stretch reads MKVLLELLLGYSVLILA. Asparagine 61 is a glycosylation site (N-linked (GlcNAc...) asparagine; by host). Transmembrane regions (helical) follow at residues 128–148 and 153–173; these read HCCFYLVFSIAFVGYIVFVYN and LNTTMKLLALLSILIWLSQPA. Residues asparagine 238 and asparagine 263 are each glycosylated (N-linked (GlcNAc...) asparagine; by host).

The protein belongs to the asfivirus MGF 110 family.

The protein localises to the host membrane. In terms of biological role, plays a role in virus cell tropism, and may be required for efficient virus replication in macrophages. This is Protein MGF 360-3L from African swine fever virus (isolate Tick/Malawi/Lil 20-1/1983) (ASFV).